We begin with the raw amino-acid sequence, 203 residues long: Endo-type membrane-bound lytic murein transglycosylase A (203 aa).

A signal peptide spans Met1–Gly15. Cys16 is lipidated: N-palmitoyl cysteine. Cys16 carries the S-diacylglycerol cysteine lipid modification.

Belongs to the transglycosylase Slt family.

The protein resides in the cell outer membrane. The catalysed reaction is Endolytic cleavage of the (1-&gt;4)-beta-glycosidic linkage between N-acetylmuramic acid (MurNAc) and N-acetylglucosamine (GlcNAc) residues in peptidoglycan with concomitant formation of a 1,6-anhydrobond in the MurNAc residue.. Functionally, murein-degrading enzyme. May play a role in recycling of muropeptides during cell elongation and/or cell division. Preferentially cleaves at a distance of more than two disaccharide units from the ends of the glycan chain. The chain is Endo-type membrane-bound lytic murein transglycosylase A from Klebsiella pneumoniae (strain 342).